The sequence spans 146 residues: Core protein OPG114 (146 aa).

The protein belongs to the orthopoxvirus OPG114 family. As to quaternary structure, part of a complex composed of the kinase OPG054, OPG092, OPG100, OPG114, OPG115, OPG142 and OPG157.

It is found in the virion. Late protein which is part of a large complex required for early virion morphogenesis. This complex participates in the formation of virosomes and the incorporation of virosomal contents into nascent immature virions. The sequence is that of Core protein OPG114 (OPG114) from Monkeypox virus.